We begin with the raw amino-acid sequence, 214 residues long: Pyrrolidone-carboxylate peptidase (214 aa).

Residues E79, C142, and H166 contribute to the active site.

Belongs to the peptidase C15 family. In terms of assembly, homotetramer.

It localises to the cytoplasm. The catalysed reaction is Release of an N-terminal pyroglutamyl group from a polypeptide, the second amino acid generally not being Pro.. Its function is as follows. Removes 5-oxoproline from various penultimate amino acid residues except L-proline. In Fusobacterium nucleatum subsp. nucleatum (strain ATCC 25586 / DSM 15643 / BCRC 10681 / CIP 101130 / JCM 8532 / KCTC 2640 / LMG 13131 / VPI 4355), this protein is Pyrrolidone-carboxylate peptidase.